The chain runs to 227 residues: MFS-type transporter FVEG_08288 (227 aa).

A helical membrane pass occupies residues 8–28; that stretch reads VFLTVLIAIASCSVYILNIAI. Residue Asn40 is glycosylated (N-linked (GlcNAc...) asparagine). 5 helical membrane-spanning segments follow: residues 43-63, 100-120, 122-142, 164-181, and 188-208; these read TVGL…MAGG, VANT…YYGV, FMVP…HFTL, FVRN…APWM, and YMMT…IWLI.

This sequence belongs to the major facilitator superfamily.

Its subcellular location is the membrane. Functionally, MFS-type transporter; part of the Fusarium detoxification of benzoxazolinone cluster 1 (FDB1) involved in the degradation of benzoxazolinones produced by the host plant. Maize, wheat, and rye produce the 2 benzoxazinone phytoanticipins 2,4-dihy-droxy-7-methoxy-1,4-benzoxazin-3-one (DIMBOA) and 2,4-dihydroxy-1,4-benzoxazin-3-one (DIBOA) that, due to their inherent instability once released, spontaneously degrade to the more stable corresponding benzoxazolinones, 6-methoxy-2-benzoxazolinone (MBOA) and 2-benzoxazolinone (BOA), respectively. The sequence is that of MFS-type transporter FVEG_08288 from Gibberella moniliformis (strain M3125 / FGSC 7600) (Maize ear and stalk rot fungus).